The chain runs to 221 residues: uncharacterized protein (221 aa).

Residues 1–26 (MVRLVPRAFAATVALLAAGFSPATAS) form the signal peptide.

This is an uncharacterized protein from Mycobacterium tuberculosis (strain CDC 1551 / Oshkosh).